The sequence spans 896 residues: Protein translocase subunit SecA (896 aa).

Residues Gln-87, 105 to 109, and Asp-507 contribute to the ATP site; that span reads GEGKT. The interval 853–879 is disordered; the sequence is ESLSENDEASETQTFRRQEKKIGRNDP. A compositionally biased stretch (basic and acidic residues) spans 866 to 876; it reads TFRRQEKKIGR. 4 residues coordinate Zn(2+): Cys-880, Cys-882, Cys-891, and His-892.

The protein belongs to the SecA family. In terms of assembly, monomer and homodimer. Part of the essential Sec protein translocation apparatus which comprises SecA, SecYEG and auxiliary proteins SecDF-YajC and YidC. The cofactor is Zn(2+).

Its subcellular location is the cell inner membrane. The protein resides in the cytoplasm. It carries out the reaction ATP + H2O + cellular proteinSide 1 = ADP + phosphate + cellular proteinSide 2.. In terms of biological role, part of the Sec protein translocase complex. Interacts with the SecYEG preprotein conducting channel. Has a central role in coupling the hydrolysis of ATP to the transfer of proteins into and across the cell membrane, serving both as a receptor for the preprotein-SecB complex and as an ATP-driven molecular motor driving the stepwise translocation of polypeptide chains across the membrane. In Legionella pneumophila subsp. pneumophila (strain Philadelphia 1 / ATCC 33152 / DSM 7513), this protein is Protein translocase subunit SecA.